A 625-amino-acid chain; its full sequence is Probable receptor-like protein kinase At1g11050 (625 aa).

An N-terminal signal peptide occupies residues 1 to 20; sequence MPNSILFLLLSFLYLTNCVA. The Extracellular portion of the chain corresponds to 21–227; that stretch reads QSPSQTCPLD…PLNSKKKRHT (207 aa). Residues Asn40, Asn106, Asn121, and Asn177 are each glycosylated (N-linked (GlcNAc...) asparagine). The helical transmembrane segment at 228 to 248 threads the bilayer; the sequence is VALALGITGAIFGALVIAGLI. The Cytoplasmic portion of the chain corresponds to 249–625; it reads CLYFRFGKAV…LQIHSGDMLR (377 aa). Residues 295–555 form the Protein kinase domain; that stretch reads FSQKNFIGRG…NPKGIMERFL (261 aa). ATP is bound by residues 301-309 and Lys323; that span reads IGRGGFGFV. The Proton acceptor role is filled by Asp426.

The protein belongs to the protein kinase superfamily. Ser/Thr protein kinase family.

Its subcellular location is the membrane. The catalysed reaction is L-seryl-[protein] + ATP = O-phospho-L-seryl-[protein] + ADP + H(+). The enzyme catalyses L-threonyl-[protein] + ATP = O-phospho-L-threonyl-[protein] + ADP + H(+). The chain is Probable receptor-like protein kinase At1g11050 from Arabidopsis thaliana (Mouse-ear cress).